The sequence spans 359 residues: MSSSPSLNTWSDALSGFSIGWFPLGLVIVAAIPLVFIALYALTYGVYGERKISAFMQDRLGPMEVGFWGLLQTLADILKLLQKEDIVPTVADKFLFVIGPGILFVGSFLAFAVLPFGPAFIGADLNVGLFYAVGIVAIEVVGILAAGWGSNNKWALYGAVRSVAQIVSYEIPASIALLCAAMLAGTLSMQQIILMQAGPNGFLHWFLFTNPIAWLPFLIYFISSLAETNRAPFDIPEAESELVAGYFTEYSGMKFAVIFLAEYGSMFMVSAIISIAFLGGWTSPLPNIGGLELNTMTSGPVWGAFWIIMKGFFFIFVQMWLRWTLPRLRVDQLMYLCWKVLTPFSLVSFVLTAIWVINH.

8 consecutive transmembrane segments (helical) span residues 19-39 (IGWF…FIAL), 94-114 (FLFV…FAVL), 127-147 (VGLF…LAAG), 175-195 (IALL…IILM), 202-222 (FLHW…IYFI), 255-275 (FAVI…IISI), 301-321 (VWGA…QMWL), and 337-357 (CWKV…IWVI).

This sequence belongs to the complex I subunit 1 family. NDH-1 is composed of 14 different subunits. Subunits NuoA, H, J, K, L, M, N constitute the membrane sector of the complex.

The protein localises to the cell inner membrane. The enzyme catalyses a quinone + NADH + 5 H(+)(in) = a quinol + NAD(+) + 4 H(+)(out). In terms of biological role, NDH-1 shuttles electrons from NADH, via FMN and iron-sulfur (Fe-S) centers, to quinones in the respiratory chain. The immediate electron acceptor for the enzyme in this species is believed to be ubiquinone. Couples the redox reaction to proton translocation (for every two electrons transferred, four hydrogen ions are translocated across the cytoplasmic membrane), and thus conserves the redox energy in a proton gradient. This subunit may bind ubiquinone. This chain is NADH-quinone oxidoreductase subunit H, found in Chlorobaculum tepidum (strain ATCC 49652 / DSM 12025 / NBRC 103806 / TLS) (Chlorobium tepidum).